Here is a 433-residue protein sequence, read N- to C-terminus: MTDFFKDIPAIRYEGPDTENEFAFRHYNPDEVVMGKTLKDHLRFACAYWHSFAWPGGDPFGGQTFERPWFGDTMELAKLKADVAFDMFERLGVPYFCFHDADVRPEGDTFAESTKNLEEITDYFAEKMDATGVKLLWGTANLFSHRRFMAGAATNPDPEVFAYSAATIKSCMDATRKLGGENYVLWGGREGYETLLNTDMARERAQAGRMLQMVVDYKHKTGFAGTILIEPKPQEPTKHQYDYDVATVYGFLKDFGLEGEVKVNIEQGHAILAGHSFEHELALARALGIFGSIDMNRNDYQSGWDTDQFPNNVPEMALAYYEVLRAGGFDTGGTNFDAKLRRQSLDPADLILAHVGGMDACAAGLKAAAAMLEDGKLEAAREARYAGWSEGLGQKLLTSDLAEISDLVIAKGINPQPRSGRQERLENLVNKYL.

Catalysis depends on residues His99 and Asp102. Residues Glu230, Glu266, His269, Asp294, Asp305, Asp307, and Asp337 each coordinate Mg(2+).

Belongs to the xylose isomerase family. Homotetramer. Mg(2+) is required as a cofactor.

The protein localises to the cytoplasm. The enzyme catalyses alpha-D-xylose = alpha-D-xylulofuranose. The sequence is that of Xylose isomerase from Roseobacter denitrificans (strain ATCC 33942 / OCh 114) (Erythrobacter sp. (strain OCh 114)).